The primary structure comprises 470 residues: ATP synthase subunit beta (470 aa).

ATP is bound at residue 156-163 (GGAGVGKT).

This sequence belongs to the ATPase alpha/beta chains family. In terms of assembly, F-type ATPases have 2 components, CF(1) - the catalytic core - and CF(0) - the membrane proton channel. CF(1) has five subunits: alpha(3), beta(3), gamma(1), delta(1), epsilon(1). CF(0) has three main subunits: a(1), b(2) and c(9-12). The alpha and beta chains form an alternating ring which encloses part of the gamma chain. CF(1) is attached to CF(0) by a central stalk formed by the gamma and epsilon chains, while a peripheral stalk is formed by the delta and b chains.

It localises to the cell inner membrane. The enzyme catalyses ATP + H2O + 4 H(+)(in) = ADP + phosphate + 5 H(+)(out). Functionally, produces ATP from ADP in the presence of a proton gradient across the membrane. The catalytic sites are hosted primarily by the beta subunits. This is ATP synthase subunit beta from Thermosipho africanus (strain TCF52B).